The chain runs to 1189 residues: Pesticidal crystal protein Cry1Ca (1189 aa).

It belongs to the delta endotoxin family.

Its function is as follows. Promotes colloidosmotic lysis by binding to the midgut epithelial cells of many lepidopteran larvae including Spodoptera species. This is Pesticidal crystal protein Cry1Ca (cry1Ca) from Bacillus thuringiensis subsp. entomocidus.